A 906-amino-acid polypeptide reads, in one-letter code: Protein translocase subunit SecA (906 aa).

Residues Gln86, 104 to 108 (GEGKT), and Asp499 each bind ATP. The tract at residues 863–887 (PVVSRIDPKDRNPDDPTSWGRVSRN) is disordered. Zn(2+) is bound by residues Cys890, Cys892, Cys901, and His902.

This sequence belongs to the SecA family. Monomer and homodimer. Part of the essential Sec protein translocation apparatus which comprises SecA, SecYEG and auxiliary proteins SecDF-YajC and YidC. Requires Zn(2+) as cofactor.

The protein localises to the cell inner membrane. The protein resides in the cytoplasm. It carries out the reaction ATP + H2O + cellular proteinSide 1 = ADP + phosphate + cellular proteinSide 2.. Part of the Sec protein translocase complex. Interacts with the SecYEG preprotein conducting channel. Has a central role in coupling the hydrolysis of ATP to the transfer of proteins into and across the cell membrane, serving both as a receptor for the preprotein-SecB complex and as an ATP-driven molecular motor driving the stepwise translocation of polypeptide chains across the membrane. The sequence is that of Protein translocase subunit SecA from Rickettsia rickettsii (strain Iowa).